A 142-amino-acid chain; its full sequence is Large ribosomal subunit protein uL11 (142 aa).

The protein belongs to the universal ribosomal protein uL11 family. In terms of assembly, part of the ribosomal stalk of the 50S ribosomal subunit. Interacts with L10 and the large rRNA to form the base of the stalk. L10 forms an elongated spine to which L12 dimers bind in a sequential fashion forming a multimeric L10(L12)X complex. Post-translationally, one or more lysine residues are methylated.

Its function is as follows. Forms part of the ribosomal stalk which helps the ribosome interact with GTP-bound translation factors. The polypeptide is Large ribosomal subunit protein uL11 (Akkermansia muciniphila (strain ATCC BAA-835 / DSM 22959 / JCM 33894 / BCRC 81048 / CCUG 64013 / CIP 107961 / Muc)).